Here is a 161-residue protein sequence, read N- to C-terminus: Large ribosomal subunit protein uL11 (161 aa).

Belongs to the universal ribosomal protein uL11 family. Part of the ribosomal stalk of the 50S ribosomal subunit. Interacts with L10 and the large rRNA to form the base of the stalk. L10 forms an elongated spine to which L12 dimers bind in a sequential fashion forming a multimeric L10(L12)X complex.

Forms part of the ribosomal stalk which helps the ribosome interact with GTP-bound translation factors. The polypeptide is Large ribosomal subunit protein uL11 (Methanosarcina mazei (strain ATCC BAA-159 / DSM 3647 / Goe1 / Go1 / JCM 11833 / OCM 88) (Methanosarcina frisia)).